A 549-amino-acid chain; its full sequence is Cation/acetate symporter ActP (549 aa).

The next 13 membrane-spanning stretches (helical) occupy residues 33 to 53 (WQAI…TYWA), 77 to 97 (LAIA…ALVF), 103 to 123 (GLIY…LIAE), 148 to 168 (ILSA…QMVG), 183 to 203 (IAVV…GMLA), 206 to 226 (WVQI…AFMV), 262 to 282 (ISAL…PHIL), 303 to 323 (GFMG…IMLV), 355 to 375 (LFLG…VAGL), 404 to 424 (VSKI…MLFE), 428 to 448 (IAFM…PIIL), 464 to 484 (GGWL…TIWV), and 493 to 513 (IFPY…GIWF).

Belongs to the sodium:solute symporter (SSF) (TC 2.A.21) family.

The protein resides in the cell inner membrane. Its function is as follows. Transports acetate. This is Cation/acetate symporter ActP from Shigella boydii serotype 4 (strain Sb227).